Here is a 360-residue protein sequence, read N- to C-terminus: Fructose import permease protein FrcC (360 aa).

Helical transmembrane passes span 48 to 68, 84 to 106, 125 to 145, 155 to 175, 205 to 225, 254 to 274, 284 to 304, 310 to 330, and 335 to 355; these read AAVPLIVLVLSLIAFGVILGG, AIVGIVGAAQTLVILTAGIDLSV, GFPPALSVICGLGVGALCGYI, LPPFIVTLGMWQIVLASNFLY, AVFTYGVVVMVLLVCLLWYVL, MLISIYTLSGLICALAGWALI, AGQFANIESITAVVIGGISLF, IMGMLFGALIVGVFSLGLRLM, and QWTYLLIGLLIIIAVAIDQWI.

The protein belongs to the binding-protein-dependent transport system permease family. In terms of assembly, the complex is composed of two ATP-binding proteins (FrcA), two transmembrane proteins (FrcC) and a solute-binding protein (FrcB).

It localises to the cell inner membrane. Functionally, part of the high-affinity ABC transporter complex FrcBCA involved in fructose uptake. Is also a high-affinity transporter for ribose and mannose. Responsible for the translocation of the substrate across the membrane. This chain is Fructose import permease protein FrcC, found in Rhizobium meliloti (Ensifer meliloti).